A 208-amino-acid polypeptide reads, in one-letter code: NADH-ubiquinone oxidoreductase chain 4 (208 aa).

A run of 6 helical transmembrane segments spans residues 23–43, 60–80, 93–113, 114–134, 147–167, and 185–205; these read VWIN…NLLW, PLSA…LLAS, KLYI…FSAN, ELIM…IIIT, IYFL…LIYI, and PINQ…AFMV.

Belongs to the complex I subunit 4 family. As to quaternary structure, core subunit of respiratory chain NADH dehydrogenase (Complex I) which is composed of 45 different subunits.

The protein localises to the mitochondrion inner membrane. It carries out the reaction a ubiquinone + NADH + 5 H(+)(in) = a ubiquinol + NAD(+) + 4 H(+)(out). Core subunit of the mitochondrial membrane respiratory chain NADH dehydrogenase (Complex I) which catalyzes electron transfer from NADH through the respiratory chain, using ubiquinone as an electron acceptor. Essential for the catalytic activity and assembly of complex I. This Microtus pennsylvanicus (Meadow vole) protein is NADH-ubiquinone oxidoreductase chain 4 (MT-ND4).